The primary structure comprises 1186 residues: Chromosome partition protein Smc (1186 aa).

Residue 32 to 39 (PNGSGKSN) coordinates ATP. Coiled coils occupy residues 167 to 206 (VLKYKTRKKKAENKLFETQDNLNRVEDILHELEGQVEPLK) and 259 to 481 (SSAI…QAYQ). Residues 519 to 637 (GIRGAVLELI…EDLKGANELA (119 aa)) form the SMC hinge domain. Coiled coils occupy residues 672-864 (LLGR…MSSS), 893-943 (RDQR…NLLQ), and 990-1029 (SIDEFERVNERYKFLSEQKEDLTEAKNTLFQVIEEMDEEM).

Belongs to the SMC family. In terms of assembly, homodimer.

It is found in the cytoplasm. Required for chromosome condensation and partitioning. The protein is Chromosome partition protein Smc of Bacillus subtilis (strain 168).